A 516-amino-acid polypeptide reads, in one-letter code: GMP synthase [glutamine-hydrolyzing] (516 aa).

The Glutamine amidotransferase type-1 domain occupies 8 to 198 (KILILDFGSQ…VVNICGCDTL (191 aa)). The active-site Nucleophile is Cys-84. Catalysis depends on residues His-172 and Glu-174. The region spanning 199–391 (WNIENIIEND…LGLPYNMLYR (193 aa)) is the GMPS ATP-PPase domain. 226–232 (SGGVDSS) provides a ligand contact to ATP.

Homodimer.

The enzyme catalyses XMP + L-glutamine + ATP + H2O = GMP + L-glutamate + AMP + diphosphate + 2 H(+). It participates in purine metabolism; GMP biosynthesis; GMP from XMP (L-Gln route): step 1/1. In terms of biological role, catalyzes the synthesis of GMP from XMP. The sequence is that of GMP synthase [glutamine-hydrolyzing] from Francisella tularensis subsp. novicida (strain U112).